The primary structure comprises 66 residues: Large ribosomal subunit protein uL29 (66 aa).

It belongs to the universal ribosomal protein uL29 family.

This Methylibium petroleiphilum (strain ATCC BAA-1232 / LMG 22953 / PM1) protein is Large ribosomal subunit protein uL29.